We begin with the raw amino-acid sequence, 220 residues long: MNVKIESSWQQRLQEEFDKPYFEKLVNFVKNEYGKAHILPPGHQIFHVFNSCPFQNVKVVILGQDPYPNPGQYYGICFSVPDGVAIPGSLSNIFKEIHQDLGKPLPNSGNLDRWVKQGVFPMNSVLTVRAHETGSHRNIGWETFTDAVIKKLSEERENLVFMLWGSYAKEKASLIDTDKHLILTAVHPSPRSADYGFFGCKHFSKANTFLRSRGIEEIDW.

Catalysis depends on D65, which acts as the Proton acceptor.

This sequence belongs to the uracil-DNA glycosylase (UDG) superfamily. UNG family.

It is found in the cytoplasm. It catalyses the reaction Hydrolyzes single-stranded DNA or mismatched double-stranded DNA and polynucleotides, releasing free uracil.. In terms of biological role, excises uracil residues from the DNA which can arise as a result of misincorporation of dUMP residues by DNA polymerase or due to deamination of cytosine. The chain is Uracil-DNA glycosylase 1 from Bacteroides fragilis (strain ATCC 25285 / DSM 2151 / CCUG 4856 / JCM 11019 / LMG 10263 / NCTC 9343 / Onslow / VPI 2553 / EN-2).